Consider the following 463-residue polypeptide: O-phospho-L-seryl-tRNA:Cys-tRNA synthase 2 (463 aa).

Pyridoxal 5'-phosphate is bound by residues 154-155, N259, and 282-284; these read AR and SGH. Position 285 is an N6-(pyridoxal phosphate)lysine (K285).

The protein belongs to the SepCysS family. Homodimer. Interacts with SepRS. It depends on pyridoxal 5'-phosphate as a cofactor.

It carries out the reaction O-phospho-L-seryl-tRNA(Cys) + hydrogen sulfide + H(+) = L-cysteinyl-tRNA(Cys) + phosphate. Functionally, converts O-phospho-L-seryl-tRNA(Cys) (Sep-tRNA(Cys)) to L-cysteinyl-tRNA(Cys) (Cys-tRNA(Cys)). This chain is O-phospho-L-seryl-tRNA:Cys-tRNA synthase 2, found in Methanocella arvoryzae (strain DSM 22066 / NBRC 105507 / MRE50).